Here is a 327-residue protein sequence, read N- to C-terminus: GMP reductase (327 aa).

The active-site Thioimidate intermediate is the cysteine 175. NADP(+) is bound at residue 204-227 (IIADGGIRTHGDIAKSIRFGASMV).

This sequence belongs to the IMPDH/GMPR family. GuaC type 2 subfamily.

It carries out the reaction IMP + NH4(+) + NADP(+) = GMP + NADPH + 2 H(+). Catalyzes the irreversible NADPH-dependent deamination of GMP to IMP. It functions in the conversion of nucleobase, nucleoside and nucleotide derivatives of G to A nucleotides, and in maintaining the intracellular balance of A and G nucleotides. In Exiguobacterium sp. (strain ATCC BAA-1283 / AT1b), this protein is GMP reductase.